Reading from the N-terminus, the 345-residue chain is Protein GAMETE CELL DEFECTIVE 1, mitochondrial (345 aa).

A mitochondrion-targeting transit peptide spans M1–G43. A disordered region spans residues L36–P82.

It is found in the mitochondrion. Its function is as follows. Essential for fertility (male and female gametophyte functions and development). Required for the integrity of female gametic mitochondria. Involved in embryo apical-basal patterning, and particularly dorsal-ventral patterning, during early embryogenesis, and endosperm free nucleus positioning and development as well as early endosperm development, probably by modulating the expression pattern of related genes (e.g. AL1, MYB3/AL2, CYP78A13/GE, PNH1, HAZ1, MPK6 and OSH1). Has function in triggering of endosperm programmed cell death (PCD) leading to syncytial endosperm cellularization and starchy endosperm cell maturation. Implicated in central vacuole dynamics necessary for microspore development leading to pollen production, and for pollen development and germination. The sequence is that of Protein GAMETE CELL DEFECTIVE 1, mitochondrial from Oryza sativa subsp. indica (Rice).